Consider the following 144-residue polypeptide: Large ribosomal subunit protein uL13 (144 aa).

It belongs to the universal ribosomal protein uL13 family. As to quaternary structure, part of the 50S ribosomal subunit.

Functionally, this protein is one of the early assembly proteins of the 50S ribosomal subunit, although it is not seen to bind rRNA by itself. It is important during the early stages of 50S assembly. In Buchnera aphidicola subsp. Baizongia pistaciae (strain Bp), this protein is Large ribosomal subunit protein uL13.